The following is a 420-amino-acid chain: UDP-N-acetylglucosamine 1-carboxyvinyltransferase (420 aa).

Phosphoenolpyruvate is bound at residue K22 to N23. R93 lines the UDP-N-acetyl-alpha-D-glucosamine pocket. C117 serves as the catalytic Proton donor. The residue at position 117 (C117) is a 2-(S-cysteinyl)pyruvic acid O-phosphothioketal. Positions 307 and 329 each coordinate UDP-N-acetyl-alpha-D-glucosamine.

The protein belongs to the EPSP synthase family. MurA subfamily.

The protein localises to the cytoplasm. It catalyses the reaction phosphoenolpyruvate + UDP-N-acetyl-alpha-D-glucosamine = UDP-N-acetyl-3-O-(1-carboxyvinyl)-alpha-D-glucosamine + phosphate. The protein operates within cell wall biogenesis; peptidoglycan biosynthesis. Functionally, cell wall formation. Adds enolpyruvyl to UDP-N-acetylglucosamine. This chain is UDP-N-acetylglucosamine 1-carboxyvinyltransferase, found in Shewanella halifaxensis (strain HAW-EB4).